The chain runs to 399 residues: L-methionine gamma-lyase (399 aa).

Pyridoxal 5'-phosphate-binding positions include 59–61 and 89–90; these read YTR and GI. Tyr-114 is a substrate binding site. Residue 209-211 coordinates pyridoxal 5'-phosphate; that stretch reads SAT. Lys-212 carries the N6-(pyridoxal phosphate)lysine modification. Position 376 (Arg-376) interacts with substrate.

This sequence belongs to the trans-sulfuration enzymes family. L-methionine gamma-lyase subfamily. As to quaternary structure, homotetramer; dimer of active dimers. It depends on pyridoxal 5'-phosphate as a cofactor.

The enzyme catalyses L-methionine + H2O = methanethiol + 2-oxobutanoate + NH4(+). It catalyses the reaction L-homocysteine + H2O = 2-oxobutanoate + hydrogen sulfide + NH4(+) + H(+). Its function is as follows. Catalyzes the alpha,gamma-elimination of L-methionine to produce methanethiol, 2-oxobutanoate and ammonia; methanethiol (methyl mercaptan) is considered to be one of the main causes of the oral malodor in periodontal disease and may also play a role in the pathogenicity of P.gingivalis in that disease. Is also able to catalyze the alpha,gamma-elimination of L-homocysteine. The chain is L-methionine gamma-lyase from Porphyromonas gingivalis (strain ATCC BAA-308 / W83).